The sequence spans 216 residues: UPF0323 lipoprotein HPG27_212 (216 aa).

Residues 1–27 (MKKPYRKISDYAIVGGLSALVMVSIVG) form the signal peptide. A lipid anchor (N-palmitoyl cysteine) is attached at Cys28. Residue Cys28 is the site of S-diacylglycerol cysteine attachment. Residues 159-170 (QRTYKSPQAYQR) are compositionally biased toward polar residues. Positions 159-216 (QRTYKSPQAYQRSQNSFSKSAPSASSMGGASKGQSGFFGSSRPTSSPAVSSGTRGFNS) are disordered. The segment covering 171-209 (SQNSFSKSAPSASSMGGASKGQSGFFGSSRPTSSPAVSS) has biased composition (low complexity).

The protein belongs to the UPF0323 family.

It localises to the cell membrane. In Helicobacter pylori (strain G27), this protein is UPF0323 lipoprotein HPG27_212.